We begin with the raw amino-acid sequence, 704 residues long: Polyribonucleotide nucleotidyltransferase (704 aa).

Aspartate 487 and aspartate 493 together coordinate Mg(2+). The 60-residue stretch at 554 to 613 folds into the KH domain; it reads PRLLTIKIHPDKIREVIGKGGSTIQAITKETGTQIDIQDDGTIIIASVNAIAAQAAKSRI. The region spanning 623 to 691 is the S1 motif domain; sequence GRIYEGKVAK…KQGRIRLSIK (69 aa).

It belongs to the polyribonucleotide nucleotidyltransferase family. In terms of assembly, component of the RNA degradosome, which is a multiprotein complex involved in RNA processing and mRNA degradation. Mg(2+) serves as cofactor.

It localises to the cytoplasm. It carries out the reaction RNA(n+1) + phosphate = RNA(n) + a ribonucleoside 5'-diphosphate. Involved in mRNA degradation. Catalyzes the phosphorolysis of single-stranded polyribonucleotides processively in the 3'- to 5'-direction. In Xanthomonas axonopodis pv. citri (strain 306), this protein is Polyribonucleotide nucleotidyltransferase.